A 104-amino-acid chain; its full sequence is UPF0212 protein PH1312 (104 aa).

The protein belongs to the UPF0212 family.

This is UPF0212 protein PH1312 from Pyrococcus horikoshii (strain ATCC 700860 / DSM 12428 / JCM 9974 / NBRC 100139 / OT-3).